The following is a 434-amino-acid chain: Protein translocase subunit SecY (434 aa).

Transmembrane regions (helical) follow at residues 19–39 (LFTLFVLFLFRVGSYLPIPGI), 73–93 (IFMLSIGPYISASIIVQLLVY), 117–137 (YLTIVAAVVQGYATSLYAKGI), 148–168 (YIFVAILTVTTGTFILLWFGE), 179–199 (TSLIIFSGIVVRLQAALFNLF), 209–229 (VNPVFVILIISIFILVVILII), 264–284 (VLPVIFASVLITLPLQILSGF), 300–320 (PNGFYYTFLNVILIIGFTYFY), 362–382 (FSGSIFLSIIAIIPFLVQNIF), and 391–411 (IMGGSSLLIMVGVALDTLIHI).

This sequence belongs to the SecY/SEC61-alpha family. As to quaternary structure, component of the Sec protein translocase complex. Heterotrimer consisting of SecY, SecE and SecG subunits. The heterotrimers can form oligomers, although 1 heterotrimer is thought to be able to translocate proteins. Interacts with the ribosome. Interacts with SecDF, and other proteins may be involved. Interacts with SecA.

The protein localises to the cell inner membrane. In terms of biological role, the central subunit of the protein translocation channel SecYEG. Consists of two halves formed by TMs 1-5 and 6-10. These two domains form a lateral gate at the front which open onto the bilayer between TMs 2 and 7, and are clamped together by SecE at the back. The channel is closed by both a pore ring composed of hydrophobic SecY resides and a short helix (helix 2A) on the extracellular side of the membrane which forms a plug. The plug probably moves laterally to allow the channel to open. The ring and the pore may move independently. This chain is Protein translocase subunit SecY, found in Borreliella burgdorferi (strain ATCC 35210 / DSM 4680 / CIP 102532 / B31) (Borrelia burgdorferi).